The primary structure comprises 364 residues: Methylthioribose-1-phosphate isomerase (364 aa).

Residue Asp-254 is the Proton donor of the active site.

The protein belongs to the eIF-2B alpha/beta/delta subunits family. MtnA subfamily.

Its subcellular location is the cytoplasm. The protein resides in the nucleus. The catalysed reaction is 5-(methylsulfanyl)-alpha-D-ribose 1-phosphate = 5-(methylsulfanyl)-D-ribulose 1-phosphate. The protein operates within amino-acid biosynthesis; L-methionine biosynthesis via salvage pathway; L-methionine from S-methyl-5-thio-alpha-D-ribose 1-phosphate: step 1/6. Catalyzes the interconversion of methylthioribose-1-phosphate (MTR-1-P) into methylthioribulose-1-phosphate (MTRu-1-P). The protein is Methylthioribose-1-phosphate isomerase of Drosophila melanogaster (Fruit fly).